A 238-amino-acid chain; its full sequence is 7-cyano-7-deazaguanine synthase (238 aa).

10–20 (LSGGLDSSTVL) is a binding site for ATP. Zn(2+) is bound by residues C190, C198, C201, and C204.

The protein belongs to the QueC family. Zn(2+) is required as a cofactor.

It catalyses the reaction 7-carboxy-7-deazaguanine + NH4(+) + ATP = 7-cyano-7-deazaguanine + ADP + phosphate + H2O + H(+). The protein operates within purine metabolism; 7-cyano-7-deazaguanine biosynthesis. In terms of biological role, catalyzes the ATP-dependent conversion of 7-carboxy-7-deazaguanine (CDG) to 7-cyano-7-deazaguanine (preQ(0)). In Thermoplasma acidophilum (strain ATCC 25905 / DSM 1728 / JCM 9062 / NBRC 15155 / AMRC-C165), this protein is 7-cyano-7-deazaguanine synthase.